Consider the following 407-residue polypeptide: Arginine biosynthesis bifunctional protein ArgJ (407 aa).

Substrate is bound by residues threonine 155, lysine 181, threonine 192, glutamate 278, asparagine 402, and threonine 407. Threonine 192 serves as the catalytic Nucleophile.

The protein belongs to the ArgJ family. As to quaternary structure, heterotetramer of two alpha and two beta chains.

Its subcellular location is the cytoplasm. The enzyme catalyses N(2)-acetyl-L-ornithine + L-glutamate = N-acetyl-L-glutamate + L-ornithine. It catalyses the reaction L-glutamate + acetyl-CoA = N-acetyl-L-glutamate + CoA + H(+). Its pathway is amino-acid biosynthesis; L-arginine biosynthesis; L-ornithine and N-acetyl-L-glutamate from L-glutamate and N(2)-acetyl-L-ornithine (cyclic): step 1/1. It participates in amino-acid biosynthesis; L-arginine biosynthesis; N(2)-acetyl-L-ornithine from L-glutamate: step 1/4. Functionally, catalyzes two activities which are involved in the cyclic version of arginine biosynthesis: the synthesis of N-acetylglutamate from glutamate and acetyl-CoA as the acetyl donor, and of ornithine by transacetylation between N(2)-acetylornithine and glutamate. In Thiobacillus denitrificans (strain ATCC 25259 / T1), this protein is Arginine biosynthesis bifunctional protein ArgJ.